A 586-amino-acid polypeptide reads, in one-letter code: Pyruvate kinase (586 aa).

R32 is a substrate binding site. Residues N34, S36, D66, and T67 each contribute to the K(+) site. 34–37 contributes to the ATP binding site; that stretch reads NFSH. The ATP site is built by R73 and K156. E222 is a binding site for Mg(2+). 3 residues coordinate substrate: G245, D246, and T278. D246 lines the Mg(2+) pocket.

It belongs to the pyruvate kinase family. This sequence in the C-terminal section; belongs to the PEP-utilizing enzyme family. As to quaternary structure, homotetramer. Mg(2+) serves as cofactor. It depends on K(+) as a cofactor.

The catalysed reaction is pyruvate + ATP = phosphoenolpyruvate + ADP + H(+). The protein operates within carbohydrate degradation; glycolysis; pyruvate from D-glyceraldehyde 3-phosphate: step 5/5. This is Pyruvate kinase (pyk) from Sporosarcina psychrophila (Bacillus psychrophilus).